Reading from the N-terminus, the 76-residue chain is Conotoxin Cal29b (76 aa).

The N-terminal stretch at 1–43 (MKLTCVLIVAVLILAACQFTAANMARYGKTQIARSDVKSIDAR) is a signal peptide.

It belongs to the conotoxin O1 superfamily. In terms of processing, may contain 4 disulfide bonds. Expressed by the venom duct.

It is found in the secreted. Functionally, is able to inhibit the growth of Mycobacterium tuberculosis (MIC=0.22-3.52 uM against strain H37Rv and 2 multidrug-resistant strains). May also show neurotoxic activity. In Californiconus californicus (California cone), this protein is Conotoxin Cal29b.